Reading from the N-terminus, the 185-residue chain is Iodate reductase subunit IdrB (185 aa).

The segment at residues Met1–Ala46 is a signal peptide (tat-type signal). Residues Gly69 to Ala168 form the Rieske domain. Residues Cys109, His111, Cys130, and His133 each coordinate [2Fe-2S] cluster.

The protein belongs to the AOX family. In terms of assembly, the iodate reductase (Idr) complex is composed of a molybdopterin-dependent iodate reductase (IdrA and IdrB subunits) and two associated peroxidases (IdrP1 and IdrP2). [2Fe-2S] cluster is required as a cofactor. Post-translationally, predicted to be exported by the Tat system. The position of the signal peptide cleavage has not been experimentally proven.

Its subcellular location is the periplasm. In terms of biological role, involved in iodate respiration. May accept electrons from cytochrome c551, and catalyze the reduction of iodate (IO(3)(-)) to produce the chemically unstable intermediate hypoiodous acid (HIO). This intermediate then undergoes abiotic disproportionation to yield two molecules of iodide (I(-)) and one molecule of iodate. The resultant iodate subsequently cycles back into the reductive pathway. The initial reduction of iodate may inadvertently produce low levels of incidental toxic H(2)O(2), which is detoxified by IdrP1 and IdrP2. The chain is Iodate reductase subunit IdrB from Denitromonas iodatirespirans.